Here is a 218-residue protein sequence, read N- to C-terminus: Ribose-5-phosphate isomerase A (218 aa).

Residues 28–31 (TGST), 81–84 (DGAD), and 94–97 (KGGG) each bind substrate. Residue Glu-103 is the Proton acceptor of the active site. Lys-121 serves as a coordination point for substrate.

It belongs to the ribose 5-phosphate isomerase family. In terms of assembly, homodimer.

The enzyme catalyses aldehydo-D-ribose 5-phosphate = D-ribulose 5-phosphate. Its pathway is carbohydrate degradation; pentose phosphate pathway; D-ribose 5-phosphate from D-ribulose 5-phosphate (non-oxidative stage): step 1/1. Functionally, catalyzes the reversible conversion of ribose-5-phosphate to ribulose 5-phosphate. The protein is Ribose-5-phosphate isomerase A of Proteus mirabilis (strain HI4320).